The primary structure comprises 293 residues: Acetylglutamate kinase (293 aa).

Substrate-binding positions include 68-69 (GG), R90, and N189.

Belongs to the acetylglutamate kinase family. ArgB subfamily.

The protein resides in the cytoplasm. It carries out the reaction N-acetyl-L-glutamate + ATP = N-acetyl-L-glutamyl 5-phosphate + ADP. Its pathway is amino-acid biosynthesis; L-arginine biosynthesis; N(2)-acetyl-L-ornithine from L-glutamate: step 2/4. In terms of biological role, catalyzes the ATP-dependent phosphorylation of N-acetyl-L-glutamate. This chain is Acetylglutamate kinase, found in Caldicellulosiruptor saccharolyticus (strain ATCC 43494 / DSM 8903 / Tp8T 6331).